The following is a 219-amino-acid chain: 2-hydroxy-3-keto-5-methylthiopentenyl-1-phosphate phosphatase (219 aa).

This sequence belongs to the HAD-like hydrolase superfamily. MtnX family.

The enzyme catalyses 2-hydroxy-5-methylsulfanyl-3-oxopent-1-enyl phosphate + H2O = 1,2-dihydroxy-5-(methylsulfanyl)pent-1-en-3-one + phosphate. Its pathway is amino-acid biosynthesis; L-methionine biosynthesis via salvage pathway; L-methionine from S-methyl-5-thio-alpha-D-ribose 1-phosphate: step 4/6. Its function is as follows. Dephosphorylates 2-hydroxy-3-keto-5-methylthiopentenyl-1-phosphate (HK-MTPenyl-1-P) yielding 1,2-dihydroxy-3-keto-5-methylthiopentene (DHK-MTPene). The polypeptide is 2-hydroxy-3-keto-5-methylthiopentenyl-1-phosphate phosphatase (Bacillus thuringiensis (strain Al Hakam)).